Here is a 292-residue protein sequence, read N- to C-terminus: Mycothiol acetyltransferase (292 aa).

N-acetyltransferase domains lie at 13-168 (ALDR…KWLQ) and 159-292 (KSVA…VYEK). Glutamate 40 provides a ligand contact to 1D-myo-inositol 2-(L-cysteinylamino)-2-deoxy-alpha-D-glucopyranoside. Position 77-79 (77-79 (LAV)) interacts with acetyl-CoA. 1D-myo-inositol 2-(L-cysteinylamino)-2-deoxy-alpha-D-glucopyranoside contacts are provided by glutamate 179, lysine 218, and glutamate 226. Acetyl-CoA contacts are provided by residues 230-232 (VGL) and 237-243 (RGRGLGD). Tyrosine 264 contributes to the 1D-myo-inositol 2-(L-cysteinylamino)-2-deoxy-alpha-D-glucopyranoside binding site.

The protein belongs to the acetyltransferase family. MshD subfamily. In terms of assembly, monomer.

It carries out the reaction 1D-myo-inositol 2-(L-cysteinylamino)-2-deoxy-alpha-D-glucopyranoside + acetyl-CoA = mycothiol + CoA + H(+). Functionally, catalyzes the transfer of acetyl from acetyl-CoA to desacetylmycothiol (Cys-GlcN-Ins) to form mycothiol. The polypeptide is Mycothiol acetyltransferase (Corynebacterium glutamicum (strain R)).